The primary structure comprises 280 residues: Fructose-1,6-bisphosphatase class 1 (280 aa).

4 residues coordinate Mg(2+): Glu-64, Asp-83, Leu-85, and Asp-86. Substrate is bound by residues 86-89 (DGSS), Tyr-189, and Lys-220. Glu-226 serves as a coordination point for Mg(2+).

The protein belongs to the FBPase class 1 family. In terms of assembly, homotetramer. Mg(2+) serves as cofactor.

Its subcellular location is the cytoplasm. It carries out the reaction beta-D-fructose 1,6-bisphosphate + H2O = beta-D-fructose 6-phosphate + phosphate. It participates in carbohydrate biosynthesis; gluconeogenesis. This chain is Fructose-1,6-bisphosphatase class 1, found in Campylobacter jejuni subsp. jejuni serotype O:23/36 (strain 81-176).